Reading from the N-terminus, the 277-residue chain is Diaminopimelate epimerase (277 aa).

Asn-13, Gln-46, and Asn-66 together coordinate substrate. Cys-75 serves as the catalytic Proton donor. Substrate-binding positions include 76 to 77, Asn-159, Asn-192, and 210 to 211; these read GN and ER. The Proton acceptor role is filled by Cys-219. 220–221 contributes to the substrate binding site; that stretch reads GT.

This sequence belongs to the diaminopimelate epimerase family. In terms of assembly, homodimer.

The protein localises to the cytoplasm. The catalysed reaction is (2S,6S)-2,6-diaminopimelate = meso-2,6-diaminopimelate. It functions in the pathway amino-acid biosynthesis; L-lysine biosynthesis via DAP pathway; DL-2,6-diaminopimelate from LL-2,6-diaminopimelate: step 1/1. Functionally, catalyzes the stereoinversion of LL-2,6-diaminopimelate (L,L-DAP) to meso-diaminopimelate (meso-DAP), a precursor of L-lysine and an essential component of the bacterial peptidoglycan. This Azoarcus sp. (strain BH72) protein is Diaminopimelate epimerase.